The sequence spans 114 residues: Large ribosomal subunit protein uL18 (114 aa).

It belongs to the universal ribosomal protein uL18 family. As to quaternary structure, part of the 50S ribosomal subunit; part of the 5S rRNA/L5/L18/L25 subcomplex. Contacts the 5S and 23S rRNAs.

Its function is as follows. This is one of the proteins that bind and probably mediate the attachment of the 5S RNA into the large ribosomal subunit, where it forms part of the central protuberance. This is Large ribosomal subunit protein uL18 from Porphyromonas gingivalis (strain ATCC 33277 / DSM 20709 / CIP 103683 / JCM 12257 / NCTC 11834 / 2561).